We begin with the raw amino-acid sequence, 344 residues long: L-rhamnose-proton symporter (344 aa).

The next 10 membrane-spanning stretches (helical) occupy residues 4-24, 38-58, 68-88, 101-121, 137-157, 175-195, 214-234, 259-279, 290-310, and 323-343; these read AITM…CFYA, WSIG…ALLL, FNLS…IGNI, MGIG…TPII, TLLG…AGQL, LLLA…MNAA, LPSY…FCFV, ILLS…YAWG, ISWM…GLVL, and VLSL…MGMA.

Belongs to the L-rhamnose transporter (TC 2.A.7.6) family.

The protein resides in the cell inner membrane. It carries out the reaction L-rhamnopyranose(in) + H(+)(in) = L-rhamnopyranose(out) + H(+)(out). In terms of biological role, uptake of L-rhamnose across the cytoplasmic membrane with the concomitant transport of protons into the cell (symport system). This Citrobacter koseri (strain ATCC BAA-895 / CDC 4225-83 / SGSC4696) protein is L-rhamnose-proton symporter.